The primary structure comprises 66 residues: Large ribosomal subunit protein bL35 (66 aa).

This sequence belongs to the bacterial ribosomal protein bL35 family.

The chain is Large ribosomal subunit protein bL35 from Thermomicrobium roseum (strain ATCC 27502 / DSM 5159 / P-2).